The chain runs to 396 residues: MAKEKFERKKPHVNVGTIGHVDHGKTTLTAAITTIMAKKYGGTAKAYDQIDAAPEERERGITISTAHVEYESASRHYAHVDCPGHADYVKNMITGAAQMDGAILVVSAADGPMPQTREHILLSRQVGVPYIVVFMNKADMVDDPELLELVEMEVRDLLSSYDFPGDDIPIIVGSALKALEGEDSDIGVKAIEKLVETMDSYIPEPVRNIDKPFLLPIEDVFSISGRGTVVTGRVESGIVKVGEEVEIVGIRDTQKTTCTGVEMFRKLLDEGRAGDNVGVLLRGTKRDEVERGQVLAKPGTIKPHTKFEAEVYVLSKEEGGRHTPFFNGYRPQFYFRTTDVTGTCDLPSGVEMVMPGDNVQLVVSLHAPIAMDEGLRFAIREGGRTVGAGVVAKIIE.

The 197-residue stretch at 10 to 206 (KPHVNVGTIG…TMDSYIPEPV (197 aa)) folds into the tr-type G domain. The interval 19–26 (GHVDHGKT) is G1. 19–26 (GHVDHGKT) contributes to the GTP binding site. Position 26 (Thr26) interacts with Mg(2+). The G2 stretch occupies residues 60–64 (GITIS). The tract at residues 81–84 (DCPG) is G3. GTP contacts are provided by residues 81–85 (DCPGH) and 136–139 (NKAD). Residues 136–139 (NKAD) form a G4 region. Residues 174–176 (SAL) are G5.

This sequence belongs to the TRAFAC class translation factor GTPase superfamily. Classic translation factor GTPase family. EF-Tu/EF-1A subfamily. Monomer.

It localises to the cytoplasm. The catalysed reaction is GTP + H2O = GDP + phosphate + H(+). Its function is as follows. GTP hydrolase that promotes the GTP-dependent binding of aminoacyl-tRNA to the A-site of ribosomes during protein biosynthesis. This chain is Elongation factor Tu, found in Legionella pneumophila (strain Lens).